Consider the following 412-residue polypeptide: 46 kDa FK506-binding nuclear protein (412 aa).

Composition is skewed to acidic residues over residues 95 to 113 (EEDL…EEEA), 169 to 178 (GEDIDTDEND), and 188 to 216 (EGDD…EEEE). The tract at residues 95–304 (EEDLEDEEEA…PVEKKEKKQI (210 aa)) is disordered. Over residues 247 to 257 (KSQKRRLKKKL) the composition is skewed to basic residues. Residues 271-303 (DKPKKEEPQQKAEKKKPEAKKEEAPVEKKEKKQ) show a composition bias toward basic and acidic residues. The 89-residue stretch at 324-412 (GKVVMVYYEG…VFEVDLKNVK (89 aa)) folds into the PPIase FKBP-type domain.

Belongs to the FKBP-type PPIase family. In terms of processing, phosphorylated by a nuclear kinase in the presence of Mg(2+) and ATP.

The protein localises to the nucleus. The catalysed reaction is [protein]-peptidylproline (omega=180) = [protein]-peptidylproline (omega=0). Its activity is regulated as follows. Inhibited by both FK506 and rapamycin. In terms of biological role, PPIases accelerate the folding of proteins. It catalyzes the cis-trans isomerization of proline imidic peptide bonds in oligopeptides. Binds double-stranded DNA in vitro. The sequence is that of 46 kDa FK506-binding nuclear protein (FKBP46) from Spodoptera frugiperda (Fall armyworm).